The chain runs to 561 residues: Endoplasmic reticulum oxidoreductin-1 (561 aa).

The first 18 residues, 1–18 (MVKVLQLCFLSAISLVQA), serve as a signal peptide directing secretion. Asn20 and Asn39 each carry an N-linked (GlcNAc...) asparagine glycan. 5 cysteine pairs are disulfide-bonded: Cys95/Cys349, Cys105/Cys110, Cys145/Cys166, Cys152/Cys295, and Cys352/Cys355. N-linked (GlcNAc...) asparagine glycosylation is present at Asn135. FAD is bound by residues Arg187, Thr189, Trp200, Ser228, His231, and Arg260. Residue Asn342 is glycosylated (N-linked (GlcNAc...) asparagine). The active-site Nucleophile is Cys352. Cys355 is an active-site residue. Asn452 carries an N-linked (GlcNAc...) asparagine glycan.

It belongs to the EROs family. As to quaternary structure, may function both as a monomer and a homodimer. FAD serves as cofactor.

It is found in the endoplasmic reticulum membrane. In terms of biological role, essential oxidoreductase that oxidizes proteins in the endoplasmic reticulum to produce disulfide bonds. Acts by oxidizing directly PDI1 isomerase through a direct disulfide exchange. Does not act as a direct oxidant of folding substrate, but relies on PDI1 to transfer oxidizing equivalent. Does not oxidize all pdi related proteins, suggesting that it can discriminate between PDI1 and related proteins. Its reoxidation probably involves electron transfer to molecular oxygen via FAD. Acts independently of glutathione. May be responsible for a significant proportion of reactive oxygen species (ROS) in the cell, thereby being a source of oxidative stress. In Kluyveromyces lactis (strain ATCC 8585 / CBS 2359 / DSM 70799 / NBRC 1267 / NRRL Y-1140 / WM37) (Yeast), this protein is Endoplasmic reticulum oxidoreductin-1 (ERO1).